A 345-amino-acid chain; its full sequence is Baculoviral IAP repeat-containing protein 7-B (345 aa).

BIR repeat units lie at residues 46–112 (RQRS…PFLQ) and 154–219 (RLGS…DFLL). Positions 188, 191, 208, and 215 each coordinate Zn(2+). A Phosphoserine modification is found at S237. S241 carries the post-translational modification Phosphoserine; by MAPK1. The residue at position 253 (S253) is a Phosphoserine. S257 is subject to Phosphoserine; by MAPK1. The tract at residues 258–286 (TESVSVPRAPTPGERSEPPKVSGPPLSTE) is disordered. The segment at 298 to 333 (CKVCMDKDVSMLFVPCGHLVVCTECAPNLRHCPICR) adopts an RING-type zinc-finger fold.

Belongs to the IAP family. Post-translationally, auto-ubiquitinated, and degraded in a 2-step mechanism; a caspase-independent first step and a caspase-dependent second step. Phosphorylated via MAPK-dependent and CDK-dependent pathways during oocyte maturation. Phosphorylation does not appear to affect caspase inhibition or autoubiquitination activity.

It is found in the cytoplasm. It carries out the reaction S-ubiquitinyl-[E2 ubiquitin-conjugating enzyme]-L-cysteine + [acceptor protein]-L-lysine = [E2 ubiquitin-conjugating enzyme]-L-cysteine + N(6)-ubiquitinyl-[acceptor protein]-L-lysine.. Weak apoptotic suppressor. Has E3 ubiquitin-protein ligase activity. Weak inhibitor of caspase activity. This Xenopus laevis (African clawed frog) protein is Baculoviral IAP repeat-containing protein 7-B (birc7-b).